A 275-amino-acid polypeptide reads, in one-letter code: tRNA pseudouridine synthase A (275 aa).

Aspartate 56 acts as the Nucleophile in catalysis. A substrate-binding site is contributed by tyrosine 109.

The protein belongs to the tRNA pseudouridine synthase TruA family.

The catalysed reaction is uridine(38/39/40) in tRNA = pseudouridine(38/39/40) in tRNA. In terms of biological role, formation of pseudouridine at positions 38, 39 and 40 in the anticodon stem and loop of transfer RNAs. This Methanothermobacter thermautotrophicus (strain ATCC 29096 / DSM 1053 / JCM 10044 / NBRC 100330 / Delta H) (Methanobacterium thermoautotrophicum) protein is tRNA pseudouridine synthase A.